Reading from the N-terminus, the 192-residue chain is Thymidylate kinase (192 aa).

7-14 (GIDCVGKS) contacts ATP.

This sequence belongs to the thymidylate kinase family.

The catalysed reaction is dTMP + ATP = dTDP + ADP. Its function is as follows. Phosphorylation of dTMP to form dTDP in both de novo and salvage pathways of dTTP synthesis. In Campylobacter jejuni subsp. jejuni serotype O:2 (strain ATCC 700819 / NCTC 11168), this protein is Thymidylate kinase (tmk).